Reading from the N-terminus, the 267-residue chain is 2-oxo-hept-4-ene-1,7-dioate hydratase (267 aa).

Mg(2+) is bound by residues E106, E108, and E139.

The protein belongs to the hydratase/decarboxylase family. In terms of assembly, homodecamer. Mg(2+) serves as cofactor.

It carries out the reaction (4Z)-2-oxohept-4-enedioate + H2O = (4S)-4-hydroxy-2-oxoheptanedioate. Its pathway is aromatic compound metabolism; 4-hydroxyphenylacetate degradation; pyruvate and succinate semialdehyde from 4-hydroxyphenylacetate: step 6/7. In terms of biological role, transforms 2-oxo-hept-4-ene-1,7-dioate (OHED) into 4-hydroxy-2-oxoheptanedioate, a step in the 4-hydroxyphenylacetic acid (4-HPA) degradation pathway. The polypeptide is 2-oxo-hept-4-ene-1,7-dioate hydratase (Escherichia coli).